The primary structure comprises 1831 residues: Transmembrane protein 131 homolog (1831 aa).

A signal peptide spans Met-1 to Ala-29. Over Asp-30–Asn-1169 the chain is Lumenal. The segment at Glu-118–Leu-294 is papD-L domain. Residues Ile-1170–Ala-1190 form a helical membrane-spanning segment. Residues Tyr-1191–Asn-1831 lie on the Cytoplasmic side of the membrane. The segment covering Ser-1223–Thr-1234 has biased composition (low complexity). 4 disordered regions span residues Ser-1223–Thr-1252, Gly-1325–Asp-1516, Gln-1663–Pro-1759, and Trp-1800–Asn-1831. The span at Pro-1338–Ala-1349 shows a compositional bias: acidic residues. Low complexity-rich tracts occupy residues Pro-1394–Gln-1407 and Gln-1435–Thr-1448. Positions Glu-1455–Lys-1467 are enriched in basic and acidic residues. Positions Thr-1480–Ala-1497 are enriched in polar residues. Low complexity predominate over residues Pro-1500 to Thr-1514. Composition is skewed to polar residues over residues Ser-1669–Lys-1687, Asn-1702–Gln-1733, and Trp-1742–Asn-1758. Residues Pro-1808–Gln-1820 show a composition bias toward low complexity. Residues Thr-1822–Asn-1831 show a composition bias toward acidic residues.

Belongs to the TMEM131 family. In terms of assembly, may interact (via PapD-L domain) with collagen proteins (via C-terminus); the interaction is direct and is involved in assembly and secretion of collagen. Predominantly expressed in the intestine and hypodermis.

It localises to the membrane. The protein localises to the endoplasmic reticulum membrane. Collagen binding transmembrane protein involved in collagen secretion, probably by recruiting the ER-to-Golgi transport complex TRAPPIII. Required for normal development. The polypeptide is Transmembrane protein 131 homolog (Caenorhabditis elegans).